Here is a 593-residue protein sequence, read N- to C-terminus: Cryptochrome-2 (593 aa).

In terms of domain architecture, Photolyase/cryptochrome alpha/beta spans 22–151 (ASSVHWFRKG…EVVTENSHTL (130 aa)). Residue Lys30 forms a Glycyl lysine isopeptide (Lys-Gly) (interchain with G-Cter in ubiquitin) linkage. Ser90 is modified (phosphoserine). Glycyl lysine isopeptide (Lys-Gly) (interchain with G-Cter in ubiquitin) cross-links involve residues Lys126 and Lys242. Ser266 carries the post-translational modification Phosphoserine; by MAPK. Ser271 contributes to the FAD binding site. A Phosphoserine modification is found at Ser299. Gln308 serves as a coordination point for FAD. Lys348 participates in a covalent cross-link: Glycyl lysine isopeptide (Lys-Gly) (interchain with G-Cter in ubiquitin). FAD-binding positions include His374 and 406–408 (DAD). Residues 390 to 489 (WVSWESGVRV…IIGVDYPRPI (100 aa)) form a required for inhibition of CLOCK-BMAL1-mediated transcription region. Glycyl lysine isopeptide (Lys-Gly) (interchain with G-Cter in ubiquitin) cross-links involve residues Lys475 and Lys504. The segment at 532 to 593 (PVAEPSSSQA…PTPELPSKDA (62 aa)) is disordered. Low complexity predominate over residues 537-548 (SSSQAGSMSSAG). Ser554 bears the Phosphoserine; by GSK3-beta mark. At Ser558 the chain carries Phosphoserine; by DYRK1A and MAPK.

It belongs to the DNA photolyase class-1 family. As to quaternary structure, component of the circadian core oscillator, which includes the CRY proteins, CLOCK or NPAS2, BMAL1 or BMAL2, CSNK1D and/or CSNK1E, TIMELESS, and the PER proteins. Interacts with TIMELESS. Interacts directly with PER1, PER2 and PER3; interaction with PER2 inhibits its ubiquitination and vice versa. Interacts with CLOCK-BMAL1. Interacts with CLOCK. Interacts with BMAL1. Interacts with NFIL3. Interacts with FBXL3. Interacts with FBXL21. FBXL3, PER2 and the cofactor FAD compete for overlapping binding sites. FBXL3 cannot bind CRY2 that interacts already with PER2 or that contains bound FAD. Interacts with PPP5C (via TPR repeats); the interaction down-regulates the PPP5C phosphatase activity on CSNK1E. Interacts with nuclear receptors AR and NR3C1/GR; the interaction is ligand dependent. Interacts with PRKDC and CIART. Interacts with ISCA1 (in vitro). Interacts with DDB1, USP7 and TARDBP. Interacts with HNF4A. Interacts with PPARA. Interacts with PPARD (via domain NR LBD) and NR1I2 (via domain NR LBD) in a ligand-dependent manner. Interacts with PPARG, NR1I3 and VDR in a ligand-dependent manner. It depends on FAD as a cofactor. (6R)-5,10-methylene-5,6,7,8-tetrahydrofolate serves as cofactor. In terms of processing, phosphorylation on Ser-266 by MAPK is important for the inhibition of CLOCK-BMAL1-mediated transcriptional activity. Phosphorylation by CSKNE requires interaction with PER1 or PER2. Phosphorylated in a circadian manner at Ser-554 and Ser-558 in the suprachiasmatic nucleus (SCN) and liver. Phosphorylation at Ser-558 by DYRK1A promotes subsequent phosphorylation at Ser-554 by GSK3-beta: the two-step phosphorylation at the neighboring Ser residues leads to its proteasomal degradation. Ubiquitinated by the SCF(FBXL3) and SCF(FBXL21) complexes, regulating the balance between degradation and stabilization. The SCF(FBXL3) complex is mainly nuclear and mediates ubiquitination and subsequent degradation of CRY2. In contrast, cytoplasmic SCF(FBXL21) complex-mediated ubiquitination leads to stabilize CRY2 and counteract the activity of the SCF(FBXL3) complex. The SCF(FBXL3) and SCF(FBXL21) complexes probably mediate ubiquitination at different Lys residues. The SCF(FBXL3) complex recognizes and binds CRY2 phosphorylated at Ser-554 and Ser-558. Ubiquitination may be inhibited by PER2. Deubiquitinated by USP7. Expressed in all tissues examined including fetal brain, fibroblasts, heart, brain, placenta, lung, liver, skeletal muscle, kidney, pancreas, spleen, thymus, prostate, testis, ovary, small intestine, colon and leukocytes. Highest levels in heart and skeletal muscle.

The protein localises to the cytoplasm. The protein resides in the nucleus. KL001 (N-[3-(9H-carbazol-9-yl)-2-hydroxypropyl]-N-(2-furanylmethyl)-methanesulfonamide) binds to CRY1 and stabilizes it by inhibiting FBXL3- and ubiquitin-dependent degradation of CRY1 resulting in lengthening of the circadian periods. In terms of biological role, transcriptional repressor which forms a core component of the circadian clock. The circadian clock, an internal time-keeping system, regulates various physiological processes through the generation of approximately 24 hour circadian rhythms in gene expression, which are translated into rhythms in metabolism and behavior. It is derived from the Latin roots 'circa' (about) and 'diem' (day) and acts as an important regulator of a wide array of physiological functions including metabolism, sleep, body temperature, blood pressure, endocrine, immune, cardiovascular, and renal function. Consists of two major components: the central clock, residing in the suprachiasmatic nucleus (SCN) of the brain, and the peripheral clocks that are present in nearly every tissue and organ system. Both the central and peripheral clocks can be reset by environmental cues, also known as Zeitgebers (German for 'timegivers'). The predominant Zeitgeber for the central clock is light, which is sensed by retina and signals directly to the SCN. The central clock entrains the peripheral clocks through neuronal and hormonal signals, body temperature and feeding-related cues, aligning all clocks with the external light/dark cycle. Circadian rhythms allow an organism to achieve temporal homeostasis with its environment at the molecular level by regulating gene expression to create a peak of protein expression once every 24 hours to control when a particular physiological process is most active with respect to the solar day. Transcription and translation of core clock components (CLOCK, NPAS2, BMAL1, BMAL2, PER1, PER2, PER3, CRY1 and CRY2) plays a critical role in rhythm generation, whereas delays imposed by post-translational modifications (PTMs) are important for determining the period (tau) of the rhythms (tau refers to the period of a rhythm and is the length, in time, of one complete cycle). A diurnal rhythm is synchronized with the day/night cycle, while the ultradian and infradian rhythms have a period shorter and longer than 24 hours, respectively. Disruptions in the circadian rhythms contribute to the pathology of cardiovascular diseases, cancer, metabolic syndromes and aging. A transcription/translation feedback loop (TTFL) forms the core of the molecular circadian clock mechanism. Transcription factors, CLOCK or NPAS2 and BMAL1 or BMAL2, form the positive limb of the feedback loop, act in the form of a heterodimer and activate the transcription of core clock genes and clock-controlled genes (involved in key metabolic processes), harboring E-box elements (5'-CACGTG-3') within their promoters. The core clock genes: PER1/2/3 and CRY1/2 which are transcriptional repressors form the negative limb of the feedback loop and interact with the CLOCK|NPAS2-BMAL1|BMAL2 heterodimer inhibiting its activity and thereby negatively regulating their own expression. This heterodimer also activates nuclear receptors NR1D1/2 and RORA/B/G, which form a second feedback loop and which activate and repress BMAL1 transcription, respectively. CRY1 and CRY2 have redundant functions but also differential and selective contributions at least in defining the pace of the SCN circadian clock and its circadian transcriptional outputs. Less potent transcriptional repressor in cerebellum and liver than CRY1, though less effective in lengthening the period of the SCN oscillator. Seems to play a critical role in tuning SCN circadian period by opposing the action of CRY1. With CRY1, dispensable for circadian rhythm generation but necessary for the development of intercellular networks for rhythm synchrony. May mediate circadian regulation of cAMP signaling and gluconeogenesis by blocking glucagon-mediated increases in intracellular cAMP concentrations and in CREB1 phosphorylation. Besides its role in the maintenance of the circadian clock, is also involved in the regulation of other processes. Plays a key role in glucose and lipid metabolism modulation, in part, through the transcriptional regulation of genes involved in these pathways, such as LEP or ACSL4. Represses glucocorticoid receptor NR3C1/GR-induced transcriptional activity by binding to glucocorticoid response elements (GREs). Represses the CLOCK-BMAL1 induced transcription of BHLHE40/DEC1. Represses the CLOCK-BMAL1 induced transcription of NAMPT. Represses PPARD and its target genes in the skeletal muscle and limits exercise capacity. Represses the transcriptional activity of NR1I2. This Homo sapiens (Human) protein is Cryptochrome-2 (CRY2).